A 648-amino-acid polypeptide reads, in one-letter code: Macrolide export ATP-binding/permease protein MacB (648 aa).

An ABC transporter domain is found at 5-243 (LELCNVSRSY…QGVDAAVVNT (239 aa)). 41–48 (GVSGSGKS) is an ATP binding site. The next 5 helical transmembrane spans lie at 273 to 293 (LLTM…VVVG), 417 to 437 (ANVV…IGVA), 523 to 543 (LFLT…VMNI), 577 to 597 (VLVC…IAFM), and 611 to 631 (LTAL…FGWL).

It belongs to the ABC transporter superfamily. Macrolide exporter (TC 3.A.1.122) family. In terms of assembly, homodimer. Part of the tripartite efflux system MacAB-TolC, which is composed of an inner membrane transporter, MacB, a periplasmic membrane fusion protein, MacA, and an outer membrane component, TolC. The complex forms a large protein conduit and can translocate molecules across both the inner and outer membranes. Interacts with MacA.

The protein resides in the cell inner membrane. Functionally, part of the tripartite efflux system MacAB-TolC. MacB is a non-canonical ABC transporter that contains transmembrane domains (TMD), which form a pore in the inner membrane, and an ATP-binding domain (NBD), which is responsible for energy generation. Confers resistance against macrolides. This chain is Macrolide export ATP-binding/permease protein MacB, found in Salmonella typhi.